A 152-amino-acid chain; its full sequence is Psoriasis susceptibility 1 candidate gene 1 protein homolog (152 aa).

Polar residues predominate over residues 1 to 31; sequence MTCTDQKSHSQRALGTQTPALQGPQLLNTDP. 2 disordered regions span residues 1-39 and 132-152; these read MTCT…TRPP and APTL…SSLI.

The chain is Psoriasis susceptibility 1 candidate gene 1 protein homolog (PSORS1C1) from Pan troglodytes (Chimpanzee).